The following is a 460-amino-acid chain: Crocetin glucosyltransferase 2 (460 aa).

The active-site Proton acceptor is His19. His19 is a binding site for an anthocyanidin. Thr133, Gln333, His348, Trp351, Asn352, Ser353, Glu356, Asp372, and Gln373 together coordinate UDP-alpha-D-glucose.

It belongs to the UDP-glycosyltransferase family. As to expression, mainly expressed in fully developed stigmas.

It carries out the reaction crocetin + UDP-alpha-D-glucose = beta-D-glucosyl crocetin + UDP. The enzyme catalyses beta-D-glucosyl crocetin + UDP-alpha-D-glucose = bis(beta-D-glucosyl) crocetin + UDP. The catalysed reaction is beta-D-gentiobiosyl crocetin + UDP-alpha-D-glucose = beta-D-gentiobiosyl beta-D-glucosyl crocetin + UDP. In terms of biological role, crocetin glucosyltransferase involved in the synthesis of crocin, one of the apocarotenoids responsible for the color and bitter taste of saffron. In Crocus sativus (Saffron), this protein is Crocetin glucosyltransferase 2 (GLT2).